The primary structure comprises 311 residues: 4-hydroxyproline 2-epimerase (311 aa).

The Proton acceptor role is filled by Cys-88. Residues 89-90 (GH), His-208, and Asp-232 each bind substrate. Catalysis depends on Cys-236, which acts as the Proton donor. Residue 237–238 (GT) participates in substrate binding.

It belongs to the proline racemase family.

The catalysed reaction is trans-4-hydroxy-L-proline = cis-4-hydroxy-D-proline. In terms of biological role, catalyzes the epimerization of trans-4-hydroxy-L-proline (t4LHyp) to cis-4-hydroxy-D-proline (c4DHyp). Is likely involved in a degradation pathway that converts t4LHyp to alpha-ketoglutarate. Displays no proline racemase activity. This Chromohalobacter salexigens (strain ATCC BAA-138 / DSM 3043 / CIP 106854 / NCIMB 13768 / 1H11) protein is 4-hydroxyproline 2-epimerase.